The sequence spans 265 residues: ETS-related transcription factor Elf-5 (265 aa).

Positions 43 to 129 constitute a PNT domain; sequence YPAFEHQTAC…FILQNIRTQG (87 aa). Residues 173-254 constitute a DNA-binding region (ETS); sequence SHLWEFVRDL…VDRRLVYKFG (82 aa).

It belongs to the ETS family. As to expression, expressed exclusively in tissues with a high content of epithelial cells. Highly expressed in salivary gland, mammary gland, kidney and prostate. Weakly expressed in placenta and lung. Isoform 1 and isoform 2 are differentially expressed in different tissues. In the kidney, only isoform 1 was expressed, while prostate expressed both isoforms, with levels of isoform 2 being higher. Expression is up-regulated during keratinocyte differentiation. Several epithelial carcinoma cell lines showed lack of expression.

It is found in the nucleus. Transcriptionally activator that may play a role in regulating the later stages of keratinocytes terminal differentiation. Its function is as follows. Isoform 2 binds to DNA sequences containing the consensus nucleotide core sequence GGA[AT]. Transcriptionally activates SPRR2A and the parotid gland-specific PSP promoters. This chain is ETS-related transcription factor Elf-5 (ELF5), found in Homo sapiens (Human).